Here is a 128-residue protein sequence, read N- to C-terminus: Large ribosomal subunit protein bL17 (128 aa).

The protein belongs to the bacterial ribosomal protein bL17 family. As to quaternary structure, part of the 50S ribosomal subunit. Contacts protein L32.

This chain is Large ribosomal subunit protein bL17, found in Erwinia tasmaniensis (strain DSM 17950 / CFBP 7177 / CIP 109463 / NCPPB 4357 / Et1/99).